Here is a 441-residue protein sequence, read N- to C-terminus: Endothelin receptor type B (441 aa).

An N-terminal signal peptide occupies residues 1 to 26 (MQPPPSLCGLALLALVLACGMAEVWG). At 27-100 (EEREMPSAPA…RPTEIKDTFK (74 aa)) the chain is on the extracellular side. Residues 30–90 (EMPSAPATPP…APRRTPPPCQ (61 aa)) form a disordered region. The span at 47-65 (LTPSTKTSWPRDSNASLPR) shows a compositional bias: polar residues. Asparagine 60 carries N-linked (GlcNAc...) asparagine glycosylation. A helical transmembrane segment spans residues 101 to 125 (YINTVVSCLVFVLGIIGNSTLLRII). At 126-136 (YKNKCMRNGPN) the chain is on the cytoplasmic side. A helical membrane pass occupies residues 137 to 162 (ILIASLALGDLLHIIIDIPINVYKLL). The Extracellular segment spans residues 163–174 (AEDWPFGAEMCK). A disulfide bridge links cysteine 173 with cysteine 254. The chain crosses the membrane as a helical span at residues 175–196 (LVPFIQKASVGITVLSLCALSI). Topologically, residues 197-217 (DRYRAVASWSRIKGIGVPKWT) are cytoplasmic. The helical transmembrane segment at 218 to 242 (AVEIVLIWVVSVILAVPEAIGFNLV) threads the bilayer. The Extracellular portion of the chain corresponds to 243 to 270 (TIDYKGSYLRICLLNPTQKTAFMQFYKT). A helical membrane pass occupies residues 271 to 295 (AKDWWLFSFYFCLPLAITAFFYTLM). Residues 296–323 (TCEMLRKKSGMQIALNDHLKQRREVAKT) lie on the Cytoplasmic side of the membrane. Serine 304 carries the post-translational modification Phosphoserine. A helical membrane pass occupies residues 324 to 349 (VFCLVLVFGLCWLALHLSRILKLTLY). The Extracellular portion of the chain corresponds to 350–361 (DQNDPNRCELLS). A helical transmembrane segment spans residues 362-388 (FLLVLDYIGINMASLNSCINPIALYLV). Over 389 to 441 (SKRFKNCFKSCLCCWCQSFEEKQSLEEKQSCLKFKANDHGYDNFRSSNKYSSS) the chain is Cytoplasmic. S-palmitoyl cysteine attachment occurs at residues cysteine 402 and cysteine 404. Serine 418 is subject to Phosphoserine. Tyrosine 438 bears the Phosphotyrosine mark. Phosphoserine occurs at positions 439, 440, and 441.

It belongs to the G-protein coupled receptor 1 family. Endothelin receptor subfamily. EDNRB sub-subfamily.

Its subcellular location is the cell membrane. Its function is as follows. Non-specific receptor for endothelin 1, 2, and 3. Mediates its action by association with G proteins that activate a phosphatidylinositol-calcium second messenger system. The polypeptide is Endothelin receptor type B (EDNRB) (Oryctolagus cuniculus (Rabbit)).